The following is a 184-amino-acid chain: Peptide deformylase (184 aa).

Positions 111 and 154 each coordinate Fe cation. The active site involves Glu155. His158 lines the Fe cation pocket.

The protein belongs to the polypeptide deformylase family. Fe(2+) is required as a cofactor.

It catalyses the reaction N-terminal N-formyl-L-methionyl-[peptide] + H2O = N-terminal L-methionyl-[peptide] + formate. Removes the formyl group from the N-terminal Met of newly synthesized proteins. Requires at least a dipeptide for an efficient rate of reaction. N-terminal L-methionine is a prerequisite for activity but the enzyme has broad specificity at other positions. This Lactobacillus helveticus (strain DPC 4571) protein is Peptide deformylase.